Reading from the N-terminus, the 186-residue chain is Probable peptidyl-tRNA hydrolase 2 (186 aa).

The protein belongs to the PTH2 family.

The enzyme catalyses an N-acyl-L-alpha-aminoacyl-tRNA + H2O = an N-acyl-L-amino acid + a tRNA + H(+). Its function is as follows. The natural substrate for this enzyme may be peptidyl-tRNAs which drop off the ribosome during protein synthesis. The chain is Probable peptidyl-tRNA hydrolase 2 from Drosophila melanogaster (Fruit fly).